We begin with the raw amino-acid sequence, 246 residues long: Sulfate transporter CysZ (246 aa).

The next 4 helical transmembrane spans lie at 24–44, 69–89, 148–168, and 214–234; these read LFVL…IGFA, IVWP…FTMV, LLVL…WILF, and LLIP…ATLF.

Belongs to the CysZ family.

The protein localises to the cell inner membrane. Its function is as follows. High affinity, high specificity proton-dependent sulfate transporter, which mediates sulfate uptake. Provides the sulfur source for the cysteine synthesis pathway. The polypeptide is Sulfate transporter CysZ (Pseudomonas paraeruginosa (strain DSM 24068 / PA7) (Pseudomonas aeruginosa (strain PA7))).